Reading from the N-terminus, the 252-residue chain is Type II secretion system protein N (252 aa).

At 1-4 (MKNR) the chain is on the cytoplasmic side. The helical transmembrane segment at 5-25 (LTIGLLLAAIYLFWLLLSAPA) threads the bilayer. Over 26–252 (RLLALTLSDD…QGEWLSEEKK (227 aa)) the chain is Periplasmic.

Belongs to the GSP N family.

It localises to the cell inner membrane. Involved in a type II secretion system (T2SS, formerly general secretion pathway, GSP) for the export of proteins. Required for the translocation of pullulanase. This is Type II secretion system protein N (pulN) from Klebsiella pneumoniae.